A 678-amino-acid polypeptide reads, in one-letter code: Growth arrest-specific protein 6 (678 aa).

The N-terminal stretch at 1 to 30 (MAPSLSPGPAALRRAPQLLLLLLAAECALA) is a signal peptide. A Gla domain is found at 53 to 94 (FEEAKQGHLERECVEELCSREEAREVFENDPETDYFYPRYLD). Cys65 and Cys70 form a disulfide bridge. Ser71 bears the Phosphoserine; by FAM20C mark. The region spanning 116–154 (LPDQCTPNPCDRKGTQACQDLMGNFFCLCKAGWGGRLCD) is the EGF-like 1; calcium-binding domain. Cystine bridges form between Cys120–Cys133, Cys125–Cys142, Cys144–Cys153, Cys160–Cys171, Cys167–Cys180, Cys182–Cys195, Cys201–Cys212, Cys207–Cys221, Cys223–Cys236, Cys242–Cys251, Cys247–Cys260, Cys262–Cys277, Cys283–Cys570, and Cys444–Cys470. The EGF-like 2; calcium-binding domain maps to 156 to 196 (DVNECSQENGGCLQICHNKPGSFHCSCHSGFELSSDGRTCQ). Residues 197–237 (DIDECADSEACGEARCKNLPGSYSCLCDEGFAYSSQEKACR) form the EGF-like 3; calcium-binding domain. The EGF-like 4; calcium-binding domain maps to 238–278 (DVDECLQGRCEQVCVNSPGSYTCHCDGRGGLKLSQDMDTCE). 2 consecutive Laminin G-like domains span residues 298–470 (GRMF…RMQC) and 477–670 (GSFY…AHSC). Ca(2+)-binding residues include Asp329 and Glu331. Asn420 carries an N-linked (GlcNAc...) asparagine glycan. Arg440 contacts Ca(2+). Residues Thr621 and Thr637 each carry the phosphothreonine modification. Residue Tyr640 is modified to Phosphotyrosine. A disulfide bond links Cys643 and Cys670. Residue Asp656 participates in Ca(2+) binding.

As to quaternary structure, heterodimer and heterotetramer with AXL. In terms of processing, proteolytically processed after secretion to yield a N-terminal 36 kDa protein and a C-terminal 50 kDa protein including the laminin G-like domains which activates AXL. Gamma-carboxyglutamate residues are formed by vitamin K dependent carboxylation. These residues are essential for the binding of calcium. As to expression, plasma. Isoform 1 and isoform 2 are widely expressed, isoform 1 being expressed at higher levels than isoform 2 in most tissues. Isoform 2 is the predominant form in spleen.

Its subcellular location is the secreted. Functionally, ligand for tyrosine-protein kinase receptors AXL, TYRO3 and MER whose signaling is implicated in cell growth and survival, cell adhesion and cell migration. GAS6/AXL signaling plays a role in various processes such as endothelial cell survival during acidification by preventing apoptosis, optimal cytokine signaling during human natural killer cell development, hepatic regeneration, gonadotropin-releasing hormone neuron survival and migration, platelet activation, or regulation of thrombotic responses. Its function is as follows. (Microbial infection) Can bridge virus envelope phosphatidylserine to the TAM receptor tyrosine kinase Axl to mediate viral entry by apoptotic mimicry. Plays a role in Dengue cell entry by apoptotic mimicry. Plays a role in Vaccinia virus cell entry by apoptotic mimicry. Plays a role in ebolavirus and marburgvirus cell entry by apoptotic mimicry. The sequence is that of Growth arrest-specific protein 6 from Homo sapiens (Human).